The primary structure comprises 496 residues: Putative BTB/POZ domain and WD-repeat protein R61 (496 aa).

Residues 8–78 (SNINLILNDE…MFSDIDIYKN (71 aa)) form the BTB domain. WD repeat units lie at residues 149–189 (KFPR…FNSK), 208–248 (IFDN…KEFQ), 250–285 (DYKINDICFSPDGKSCVCANKFLSIYDLDNGRRKVL), 291–330 (KSIGCIKTCVCWTSDNIIACGDSDGVIEFWNAETNLIIKW), 333–371 (VSKSRISNISFSPDRSQIAVSNQTKIILYDSIFDKKILE), and 422–464 (MYFS…DIIY).

Belongs to the mimivirus BTB/WD family.

This is Putative BTB/POZ domain and WD-repeat protein R61 from Acanthamoeba polyphaga (Amoeba).